We begin with the raw amino-acid sequence, 103 residues long: Small ribosomal subunit protein uS10 (103 aa).

Belongs to the universal ribosomal protein uS10 family. In terms of assembly, part of the 30S ribosomal subunit.

Involved in the binding of tRNA to the ribosomes. This is Small ribosomal subunit protein uS10 from Syntrophobacter fumaroxidans (strain DSM 10017 / MPOB).